We begin with the raw amino-acid sequence, 497 residues long: UPF0371 protein DIP2346 (497 aa).

The protein belongs to the UPF0371 family.

This Corynebacterium diphtheriae (strain ATCC 700971 / NCTC 13129 / Biotype gravis) protein is UPF0371 protein DIP2346.